The sequence spans 320 residues: Glutathione synthetase (320 aa).

The 186-residue stretch at 130–315 folds into the ATP-grasp domain; the sequence is KIFISWFSRF…ITGILIDYIE (186 aa). 156 to 212 contributes to the ATP binding site; the sequence is WKEKNDIILKPLDAMGGKGVFRIKKDDPNFSVIVETLTNYEKKYCMIQTYLPEVQFG. Residues glutamate 286 and asparagine 288 each coordinate Mg(2+).

Belongs to the prokaryotic GSH synthase family. Requires Mg(2+) as cofactor. Mn(2+) serves as cofactor.

The enzyme catalyses gamma-L-glutamyl-L-cysteine + glycine + ATP = glutathione + ADP + phosphate + H(+). Its pathway is sulfur metabolism; glutathione biosynthesis; glutathione from L-cysteine and L-glutamate: step 2/2. In Buchnera aphidicola subsp. Schizaphis graminum (strain Sg), this protein is Glutathione synthetase.